The chain runs to 284 residues: Tropomyosin (284 aa).

The residue at position 1 (Met-1) is an N-acetylmethionine. The interval 1–42 (MDAIKKKMQAMKLEKDNAMDRADTLEQQNKEANNRAEKSEEE) is disordered. Positions 1–284 (MDAIKKKMQA…DQTFSELSGY (284 aa)) form a coiled coil. Residues 12 to 38 (KLEKDNAMDRADTLEQQNKEANNRAEK) are compositionally biased toward basic and acidic residues.

This sequence belongs to the tropomyosin family. In terms of assembly, homodimer.

Its function is as follows. Tropomyosin, in association with the troponin complex, plays a central role in the calcium dependent regulation of muscle contraction. This Pandalus borealis (Northern red shrimp) protein is Tropomyosin.